We begin with the raw amino-acid sequence, 187 residues long: Lipoprotein signal peptidase (187 aa).

3 consecutive transmembrane segments (helical) span residues 12 to 32, 68 to 88, and 91 to 111; these read VAVFACIAIAAIAIDQLTKMW, MTWLISLLAMAACVALVVLAV, and ISMKWTVLFAFAFAGAFGNLI. Active-site residues include D127 and D140. The chain crosses the membrane as a helical span at residues 141–161; the sequence is IFLMLAGVAAVLLLFLGEPFS. A disordered region spans residues 167–187; sequence EANGKTLGDDANATDDGAKAA.

Belongs to the peptidase A8 family.

The protein resides in the cell membrane. The enzyme catalyses Release of signal peptides from bacterial membrane prolipoproteins. Hydrolyzes -Xaa-Yaa-Zaa-|-(S,diacylglyceryl)Cys-, in which Xaa is hydrophobic (preferably Leu), and Yaa (Ala or Ser) and Zaa (Gly or Ala) have small, neutral side chains.. The protein operates within protein modification; lipoprotein biosynthesis (signal peptide cleavage). In terms of biological role, this protein specifically catalyzes the removal of signal peptides from prolipoproteins. The chain is Lipoprotein signal peptidase from Bifidobacterium adolescentis (strain ATCC 15703 / DSM 20083 / NCTC 11814 / E194a).